The chain runs to 354 residues: Guanine nucleotide-binding protein G(o) subunit alpha (354 aa).

Gly-2 carries the N-myristoyl glycine lipid modification. Cys-3 carries the S-palmitoyl cysteine lipid modification. Residues 32–354 form the G-alpha domain; sequence KDVKLLLLGA…ANNLRGCGLY (323 aa). Residues 35-48 are G1 motif; the sequence is KLLLLGAGESGKST. Glu-43, Lys-46, Ser-47, Thr-48, Ser-152, Leu-176, Arg-177, Thr-178, and Arg-179 together coordinate GTP. Ser-47 contacts Mg(2+). Positions 174–182 are G2 motif; it reads DILRTRVKT. Thr-182 serves as a coordination point for Mg(2+). The G3 motif stretch occupies residues 197–206; sequence FRLFDVGGQR. Residue Gln-205 is modified to 5-glutamyl histamine. Residues 266 to 273 form a G4 motif region; that stretch reads ILFLNKKD. Residues Asn-270, Asp-273, and Cys-325 each contribute to the GTP site. Positions 324–329 are G5 motif; it reads TCATDT. Cys-351 carries the S-palmitoyl cysteine lipid modification.

The protein belongs to the G-alpha family. G(i/o/t/z) subfamily. As to quaternary structure, g proteins are composed of 3 units; alpha, beta and gamma. The alpha chain contains the guanine nucleotide binding site. Forms a complex with GNB1 and GNG3. Interacts with RGS14. Interacts with RGS16. Interacts with RGS19. Interacts (when palmitoylated) with ADGRG3. In terms of processing, histaminylated at Gln-205 residues by TGM2.

It localises to the cell membrane. Its subcellular location is the membrane. It catalyses the reaction GTP + H2O = GDP + phosphate + H(+). The GTPase activity is promoted by GTPAse activators, such as RGS14, RGS16 and RGS19. Guanine nucleotide-binding proteins (G proteins) function as transducers downstream of G protein-coupled receptors (GPCRs) in numerous signaling cascades. The alpha chain contains the guanine nucleotide binding site and alternates between an active, GTP-bound state and an inactive, GDP-bound state. Signaling by an activated GPCR promotes GDP release and GTP binding. The alpha subunit has a low GTPase activity that converts bound GTP to GDP, thereby terminating the signal. Both GDP release and GTP hydrolysis are modulated by numerous regulatory proteins. Signaling is mediated via effector proteins, such as adenylate cyclase. Inhibits adenylate cyclase activity, leading to decreased intracellular cAMP levels. This chain is Guanine nucleotide-binding protein G(o) subunit alpha (GNAO1), found in Bos taurus (Bovine).